The following is a 546-amino-acid chain: Chaperonin GroEL (546 aa).

Residues 30 to 33 (TLGP), K51, 87 to 91 (DGTTT), G415, 479 to 481 (NAA), and D495 contribute to the ATP site. Residues 527–546 (DESAAPAMPGGMGGMGDMGM) form a disordered region. A compositionally biased stretch (gly residues) spans 536-546 (GGMGGMGDMGM).

This sequence belongs to the chaperonin (HSP60) family. In terms of assembly, forms a cylinder of 14 subunits composed of two heptameric rings stacked back-to-back. Interacts with the co-chaperonin GroES.

It localises to the cytoplasm. It catalyses the reaction ATP + H2O + a folded polypeptide = ADP + phosphate + an unfolded polypeptide.. Its function is as follows. Together with its co-chaperonin GroES, plays an essential role in assisting protein folding. The GroEL-GroES system forms a nano-cage that allows encapsulation of the non-native substrate proteins and provides a physical environment optimized to promote and accelerate protein folding. In Acidovorax sp. (strain JS42), this protein is Chaperonin GroEL.